Here is a 260-residue protein sequence, read N- to C-terminus: Small ribosomal subunit protein uS2 (260 aa).

This sequence belongs to the universal ribosomal protein uS2 family.

The protein is Small ribosomal subunit protein uS2 of Streptococcus sanguinis (strain SK36).